Consider the following 70-residue polypeptide: Large ribosomal subunit protein bL31 (70 aa).

Zn(2+)-binding residues include Cys16, Cys18, Cys38, and Cys41.

This sequence belongs to the bacterial ribosomal protein bL31 family. Type A subfamily. Part of the 50S ribosomal subunit. The cofactor is Zn(2+).

Its function is as follows. Binds the 23S rRNA. This is Large ribosomal subunit protein bL31 from Mycolicibacterium gilvum (strain PYR-GCK) (Mycobacterium gilvum (strain PYR-GCK)).